A 295-amino-acid chain; its full sequence is MTVRVEIRETPGDQEAVLALAEAAAEADGVRPLNEQTLLALRYGGPSGARFLLLYDGDELAGFAYLEPSDPPSGELVVHPGFRGRGLGGRLLAAVLDTGGKGVRLWAHGDLPAAARLAAGFGMTRARALWRMRRPLTTPLPAPELPEGVRLRTFEPGRDEEAWLALNARAFADHPEQGSWTLEDLKRRQQEPWFDPAGFFLAERAGTLVGFHWTKVHAQAEGADGPIGEVYVVGVDPEERGTGLGRALTLAGLAHLRSRGLDQVMLYVDEANTAAVRLYESLGFTRWTVDVMYRR.

N-acetyltransferase domains are found at residues 5-141 and 149-295; these read VEIR…TPLP and VRLR…MYRR. Glu-35 is a 1D-myo-inositol 2-(L-cysteinylamino)-2-deoxy-alpha-D-glucopyranoside binding site. 76–78 provides a ligand contact to acetyl-CoA; the sequence is LVV. 1D-myo-inositol 2-(L-cysteinylamino)-2-deoxy-alpha-D-glucopyranoside contacts are provided by Glu-176, Lys-215, and Glu-229. Residues 233 to 235 and 240 to 246 each bind acetyl-CoA; these read VGV and RGTGLGR. Tyr-267 lines the 1D-myo-inositol 2-(L-cysteinylamino)-2-deoxy-alpha-D-glucopyranoside pocket. Position 272-277 (272-277) interacts with acetyl-CoA; that stretch reads NTAAVR.

The protein belongs to the acetyltransferase family. MshD subfamily. As to quaternary structure, monomer.

The enzyme catalyses 1D-myo-inositol 2-(L-cysteinylamino)-2-deoxy-alpha-D-glucopyranoside + acetyl-CoA = mycothiol + CoA + H(+). Functionally, catalyzes the transfer of acetyl from acetyl-CoA to desacetylmycothiol (Cys-GlcN-Ins) to form mycothiol. This Thermobispora bispora (strain ATCC 19993 / DSM 43833 / CBS 139.67 / JCM 10125 / KCTC 9307 / NBRC 14880 / R51) protein is Mycothiol acetyltransferase.